The following is a 459-amino-acid chain: Glutamate--tRNA ligase 2 (459 aa).

The short motif at 8–18 is the 'HIGH' region element; it reads PSPTGYIHIGN. Residues 249-253 carry the 'KMSKS' region motif; it reads GLSKR. K252 contributes to the ATP binding site.

This sequence belongs to the class-I aminoacyl-tRNA synthetase family. Glutamate--tRNA ligase type 1 subfamily. Monomer.

The protein localises to the cytoplasm. The enzyme catalyses tRNA(Glu) + L-glutamate + ATP = L-glutamyl-tRNA(Glu) + AMP + diphosphate. Catalyzes the attachment of glutamate to tRNA(Glu) in a two-step reaction: glutamate is first activated by ATP to form Glu-AMP and then transferred to the acceptor end of tRNA(Glu). This is Glutamate--tRNA ligase 2 from Bartonella henselae (strain ATCC 49882 / DSM 28221 / CCUG 30454 / Houston 1) (Rochalimaea henselae).